Consider the following 597-residue polypeptide: FERM domain-containing protein 3 (597 aa).

An FERM domain is found at 32–312 (MRCTIRLLDD…ENQAFYKYAK (281 aa)). The interval 383–403 (LLPSPSEQEEELPLGEGVPLP) is disordered. A helical transmembrane segment spans residues 531–551 (LLVVGLGLLLFVFPLLLLLLE).

Ovary-specific.

It localises to the membrane. In terms of biological role, putative tumor suppressor gene that may be implicated in the origin and progression of lung cancer. The polypeptide is FERM domain-containing protein 3 (FRMD3) (Homo sapiens (Human)).